Here is a 506-residue protein sequence, read N- to C-terminus: Anaerobic nitric oxide reductase transcription regulator NorR (506 aa).

Asp-57 carries the 4-aspartylphosphate modification. The region spanning 187–416 (MIGLSPAMTQ…LEHAIHRAVV (230 aa)) is the Sigma-54 factor interaction domain. Residues 215-222 (GETGTGKE) and 278-287 (ADNGTLFLDE) contribute to the ATP site. The segment at residues 481 to 500 (WAASARALETDVANLHRLAK) is a DNA-binding region (H-T-H motif).

The protein operates within nitrogen metabolism; nitric oxide reduction. In terms of biological role, required for the expression of anaerobic nitric oxide (NO) reductase, acts as a transcriptional activator for at least the norVW operon. Activation also requires sigma-54. This Salmonella schwarzengrund (strain CVM19633) protein is Anaerobic nitric oxide reductase transcription regulator NorR.